The chain runs to 296 residues: Phosphatidylglycerol--prolipoprotein diacylglyceryl transferase (296 aa).

Helical transmembrane passes span 17–37 (LAVR…IVVG), 59–79 (MMFY…VLFY), and 97–117 (GGMS…LFAW). R142 contacts a 1,2-diacyl-sn-glycero-3-phospho-(1'-sn-glycerol). Transmembrane regions (helical) follow at residues 230-250 (MGAI…TVEF) and 265-285 (LSMG…MMIW).

The protein belongs to the Lgt family.

Its subcellular location is the cell inner membrane. The enzyme catalyses L-cysteinyl-[prolipoprotein] + a 1,2-diacyl-sn-glycero-3-phospho-(1'-sn-glycerol) = an S-1,2-diacyl-sn-glyceryl-L-cysteinyl-[prolipoprotein] + sn-glycerol 1-phosphate + H(+). It participates in protein modification; lipoprotein biosynthesis (diacylglyceryl transfer). Catalyzes the transfer of the diacylglyceryl group from phosphatidylglycerol to the sulfhydryl group of the N-terminal cysteine of a prolipoprotein, the first step in the formation of mature lipoproteins. In Burkholderia thailandensis (strain ATCC 700388 / DSM 13276 / CCUG 48851 / CIP 106301 / E264), this protein is Phosphatidylglycerol--prolipoprotein diacylglyceryl transferase.